The following is a 230-amino-acid chain: Protein UPS2, mitochondrial (230 aa).

Residues 1–175 (MKLFQNSYDF…VLQVFSENWE (175 aa)) enclose the PRELI/MSF1 domain.

It belongs to the slowmo family. Interacts with MDM35.

The protein resides in the mitochondrion inner membrane. It localises to the mitochondrion intermembrane space. Its function is as follows. Required for mitochondrial cristae morphogenesis and MGM1-processing. Controls the stability of mitochondrial phosphatidylethanolamine (PE). With UPS1, controls the level of cardiolipin in mitochondria. Cardiolipin is a unique phospholipid with four fatty acid chains and is present mainly in the mitochondrial inner membrane where it stabilizes the electron transport chain supercomplex between complexes III and IV through direct interaction of their subunits. The polypeptide is Protein UPS2, mitochondrial (UPS2) (Saccharomyces cerevisiae (strain ATCC 204508 / S288c) (Baker's yeast)).